Reading from the N-terminus, the 350-residue chain is Inner membrane protein YhiM (350 aa).

The Cytoplasmic portion of the chain corresponds to M1 to N2. A helical membrane pass occupies residues I3–L23. Over G24–H41 the chain is Periplasmic. The chain crosses the membrane as a helical span at residues V42 to S62. Residues Q63–T74 are Cytoplasmic-facing. Residues L75–L95 form a helical membrane-spanning segment. Topologically, residues A96–E104 are periplasmic. Residues F105–A125 traverse the membrane as a helical segment. Residues A126–N157 are Cytoplasmic-facing. The helical transmembrane segment at C158–L178 threads the bilayer. The Periplasmic segment spans residues R179–G190. A helical transmembrane segment spans residues H191–V211. The Cytoplasmic portion of the chain corresponds to H212 to L225. The helical transmembrane segment at W226–V246 threads the bilayer. Residues S247–G257 lie on the Periplasmic side of the membrane. Residues I258–A278 traverse the membrane as a helical segment. Over L279 to R290 the chain is Cytoplasmic. A helical membrane pass occupies residues I291 to E311. Over M312–R324 the chain is Periplasmic. Residues V325–A345 form a helical membrane-spanning segment. The Cytoplasmic portion of the chain corresponds to G346–K350.

It is found in the cell inner membrane. The chain is Inner membrane protein YhiM (yhiM) from Escherichia coli (strain K12).